The following is a 753-amino-acid chain: 5-methyltetrahydropteroyltriglutamate--homocysteine methyltransferase (753 aa).

5-methyltetrahydropteroyltri-L-glutamate is bound by residues 17 to 20 and K117; that span reads RELK. L-homocysteine-binding positions include 431–433 and E484; that span reads IGS. Residues 431–433 and E484 each bind L-methionine; that span reads IGS. Residues 515–516 and W561 each bind 5-methyltetrahydropteroyltri-L-glutamate; that span reads RC. D599 contacts L-homocysteine. Residue D599 participates in L-methionine binding. Position 605 (E605) interacts with 5-methyltetrahydropteroyltri-L-glutamate. Zn(2+) is bound by residues H641, C643, and E665. The active-site Proton donor is H694. Residue C726 participates in Zn(2+) binding.

This sequence belongs to the vitamin-B12 independent methionine synthase family. Zn(2+) is required as a cofactor.

It catalyses the reaction 5-methyltetrahydropteroyltri-L-glutamate + L-homocysteine = tetrahydropteroyltri-L-glutamate + L-methionine. It functions in the pathway amino-acid biosynthesis; L-methionine biosynthesis via de novo pathway; L-methionine from L-homocysteine (MetE route): step 1/1. Its function is as follows. Catalyzes the transfer of a methyl group from 5-methyltetrahydrofolate to homocysteine resulting in methionine formation. The protein is 5-methyltetrahydropteroyltriglutamate--homocysteine methyltransferase of Escherichia coli O157:H7.